We begin with the raw amino-acid sequence, 76 residues long: Conotoxin VnMEKL-012 (76 aa).

The signal sequence occupies residues 1-18 (MKLTILFLVAAVLMSTQA). Residues 19–42 (LIQHDGEKSQKAKMKFLTARTLSA) constitute a propeptide that is removed on maturation. Disulfide bonds link Cys49-Cys65, Cys56-Cys70, and Cys64-Cys74.

It belongs to the conotoxin O2 superfamily. In terms of tissue distribution, expressed by the venom duct.

The protein localises to the secreted. The sequence is that of Conotoxin VnMEKL-012 from Conus ventricosus (Mediterranean cone).